A 585-amino-acid polypeptide reads, in one-letter code: Type IV pilus assembly ATPase TfpB (585 aa).

346-351 (GSGKTT) is a binding site for ATP. Positions 476, 479, 511, and 514 each coordinate Zn(2+).

It belongs to the GSP E family.

It is found in the cytoplasm. ATPase component of the type IV pilus (T4P). Acts as a molecular motor to provide the energy that is required for biogenesis of the pilus and the extrusion of substrates generated in the cytoplasm. TfpB is required for optimal T4P extension and, consequently, efficient natural transformation. May play a role in initiating T4P extension. The polypeptide is Type IV pilus assembly ATPase TfpB (Acinetobacter baylyi (strain ATCC 33305 / BD413 / ADP1)).